Here is a 252-residue protein sequence, read N- to C-terminus: MAIALSTLVEEADRYLDAARIQDYCPNGLQVEGRPQVRRIVSGVTASQALLDAAVEADADVVLVHHGYFWKGENPCVVGMKQRRLKTLLNNDISLLAYHLPLDLHPEVGNNVQLARQLGFEVEGPLEPGNPRSIVLLGSLAEPMQPADFARHVRDALGREPLLVDAGQPIRRIAWCTGGAQGYIDQAIAAGVDAYLTGEVSEQTVHSARENGISFIAAGHHATERYGVQALGDYLGKRFAIEHLFIDCPNPA.

Positions 65, 66, 103, 220, and 224 each coordinate a divalent metal cation.

This sequence belongs to the GTP cyclohydrolase I type 2/NIF3 family. As to quaternary structure, homohexamer.

The polypeptide is GTP cyclohydrolase 1 type 2 homolog (Pseudomonas aeruginosa (strain ATCC 15692 / DSM 22644 / CIP 104116 / JCM 14847 / LMG 12228 / 1C / PRS 101 / PAO1)).